The following is a 549-amino-acid chain: Cation/acetate symporter ActP (549 aa).

Helical transmembrane passes span 33–53, 76–96, 103–123, 149–169, 183–203, 206–226, 262–282, 303–323, 355–375, 404–424, 428–448, 463–483, and 493–513; these read WQAIIMFLIFVLLTLYITYWA, GLAIAGDFMSAASFLGISALV, GLIYSLGFLVGWPIILFLIAE, LSACGSLVVVALYLIAQMVGA, IAVVLVGVLMVMYVLFGGMLA, WVQIIKAVLLLFGASFMAFMV, ISALSLGLGLMFGTAGLPHIL, GFMGYFYILTFIIGFGAIMLV, LFLGFISAVAFATILAVVAGL, VSKITVLILGVVAILLGILFE, IAFMVGLAFSIAASCNFPIIL, IGGWLGLLTAVILMVLGPTIW, and IFPYEYPALFSIAVAFIGIWF.

The protein belongs to the sodium:solute symporter (SSF) (TC 2.A.21) family.

The protein resides in the cell inner membrane. Its function is as follows. Transports acetate. This Enterobacter sp. (strain 638) protein is Cation/acetate symporter ActP.